The chain runs to 659 residues: Putative RING finger protein R311 (659 aa).

An RING-type zinc finger spans residues 502-540; sequence CPVCYDDDYIKTKLICGHTVCLTCVLNILPNSKGCPLCM.

This chain is Putative RING finger protein R311, found in Acanthamoeba polyphaga (Amoeba).